A 552-amino-acid chain; its full sequence is Chaperonin GroEL 1 (552 aa).

Residues 30-33 (TLGP), Lys-51, 87-91 (DGTTT), Gly-415, 479-481 (NAA), and Asp-495 contribute to the ATP site.

Belongs to the chaperonin (HSP60) family. Forms a cylinder of 14 subunits composed of two heptameric rings stacked back-to-back. Interacts with the co-chaperonin GroES.

Its subcellular location is the cytoplasm. It catalyses the reaction ATP + H2O + a folded polypeptide = ADP + phosphate + an unfolded polypeptide.. In terms of biological role, together with its co-chaperonin GroES, plays an essential role in assisting protein folding. The GroEL-GroES system forms a nano-cage that allows encapsulation of the non-native substrate proteins and provides a physical environment optimized to promote and accelerate protein folding. This chain is Chaperonin GroEL 1, found in Albidiferax ferrireducens (strain ATCC BAA-621 / DSM 15236 / T118) (Rhodoferax ferrireducens).